Reading from the N-terminus, the 445-residue chain is Fatty acid desaturase 3 (445 aa).

The segment at 1–21 is disordered; the sequence is MGGVGEPGPREGPAQPGAPLP. Topologically, residues 1–133 are cytoplasmic; sequence MGGVGEPGPR…DMKLFDASPT (133 aa). The 78-residue stretch at 20–97 folds into the Cytochrome b5 heme-binding domain; that stretch reads LPTFCWEQIR…LQPLLIGELA (78 aa). A helical membrane pass occupies residues 134 to 154; it reads FFAFLLGHILAMEVLAWLLIY. At 155-159 the chain is on the lumenal side; that stretch reads LLGPG. A helical transmembrane segment spans residues 160-180; it reads WVPSALAAFILAISQAQSWCL. The Cytoplasmic portion of the chain corresponds to 181-263; that stretch reads QHDLGHASIF…KRRYLPYNQQ (83 aa). The Histidine box-1 motif lies at 182 to 186; that stretch reads HDLGH. The short motif at 219–223 is the Histidine box-2 element; that stretch reads HFQHH. A helical transmembrane segment spans residues 264-284; sequence HLYFFLIGPPLLTLVNFEVEN. The Lumenal segment spans residues 285-306; the sequence is LAYMLVCMQWADLLWAASFYAR. Residues 307 to 327 form a helical membrane-spanning segment; the sequence is FFLSYLPFYGVPGVLLFFVAV. The Cytoplasmic segment spans residues 328–445; it reads RVLESHWFVW…DIWLDAYLHQ (118 aa). The Histidine box-3 motif lies at 383–387; the sequence is QIEHH.

Belongs to the fatty acid desaturase type 1 family. As to expression, highly expressed in various organs and tissues including liver, kidney, brain, lung, pancreas, testis, ovary and skeletal muscle (at protein level).

It localises to the endoplasmic reticulum membrane. The catalysed reaction is an N-acylsphing-4-enine + 2 Fe(II)-[cytochrome b5] + O2 + 2 H(+) = an N-acyl-sphinga-4E,14Z-dienine + 2 Fe(III)-[cytochrome b5] + 2 H2O. It carries out the reaction N-(hexanoyl)sphing-4-enine + 2 Fe(II)-[cytochrome b5] + O2 + 2 H(+) = N-hexanoyl-sphinga-4E,14Z-dienine + 2 Fe(III)-[cytochrome b5] + 2 H2O. It catalyses the reaction sphing-4-enine + 2 Fe(II)-[cytochrome b5] + O2 + 2 H(+) = sphinga-4E,14Z-dienine + 2 Fe(III)-[cytochrome b5] + 2 H2O. The enzyme catalyses (11E)-octadecenoyl-CoA + 2 Fe(II)-[cytochrome b5] + O2 + 2 H(+) = (11E,13Z)-octadecadienoyl-CoA + 2 Fe(III)-[cytochrome b5] + 2 H2O. The catalysed reaction is N-acyl-1-deoxysphinganine + 2 Fe(II)-[cytochrome b5] + O2 + 2 H(+) = N-acyl-1-deoxysphing-14Z-enine + 2 Fe(III)-[cytochrome b5] + 2 H2O. It carries out the reaction an N-acylsphinganine + 2 Fe(II)-[cytochrome b5] + O2 + 2 H(+) = an N-acylsphing-14Z-enine + 2 Fe(III)-[cytochrome b5] + 2 H2O. Its pathway is lipid metabolism; sphingolipid metabolism. It participates in lipid metabolism; polyunsaturated fatty acid biosynthesis. Functionally, mammals have different sphingoid bases that differ in their length and/or pattern of desaturation and hydroxyl groups. The predominant sphingoid base that comprises mammalian ceramides is sphing-4-enine (sphingosine or SPH) which has a trans (E) desaturation at carbon 4. FADS3 is a desaturase that introduces a cis (Z) double bond between carbon 14 and carbon 15 of the sphingoid base (also known as long chain base, LCB), producing LCBs such as sphinga-4,14-dienine (SPD, d18:2(4E,14Z)) from SPH. Prefers SPH-containing ceramides (N-acylsphing-4-enines) as substrates. Capable of metabolizing also the SPH in its free form. SPD ceramides occur widely in mammalian tissues and cells. Due to their unusual structure containing a cis double bond, SPD ceramides may have an opposite, negative role in lipid microdomain formation relative to conventional ceramides. Could be involved in the detoxification of 1-deoxy sphingolipids, by desaturating the cytotoxic 1-deoxysphinganine (1-deoxySA, m18:0), produced under pathological conditions, to 1-deoxysphingenine (1-deoxysphingosine, 1-deoxySO, m18:1). Although prefers SPH-containing ceramides (N-acylsphing-4-enines) as substrates, it also exhibits activity toward dihydrosphingosine-containing CERs (N-acylsphinganines) and produces 14Z-SPH-containing sphingolipids,which can be found in patients with DEGS1 mutations. Its desaturase mechanism involves an electron transfer facilitated by cytochrome b5. FADS3 also acts as a methyl-end fatty acyl coenzyme A (CoA) desaturase that introduces a cis double bond between the preexisting double bond and the terminal methyl group of the fatty acyl chain. Desaturates (11E)-octadecenoate (trans-vaccenoate, the predominant trans fatty acid in human milk) at carbon 13 to generate (11E,13Z)-octadecadienoate (also known as conjugated linoleic acid 11E,13Z-CLA). The chain is Fatty acid desaturase 3 from Homo sapiens (Human).